A 219-amino-acid chain; its full sequence is MNKFSSDSSRTTAQSTINKLLVNLIPGSQLNDAKVAKKAKKSSSAKIISDQIGSRMEFKRNEEKRRKFLKQNNLKKRKMKRKSKDLEAQLERIARLSNIKELQQMSEDSNDPLLDQVIDKKITALLSWTTDNSELGTEIEKLKKDILNTDNEEVRRRKSYRDEEREEAEFRSEVEKGSIAYPGLTPGLAPVGLSDDEDDEEEDESDGFDKEEEEDQFSE.

Over residues 153–176 (EVRRRKSYRDEEREEAEFRSEVEK) the composition is skewed to basic and acidic residues. Residues 153-219 (EVRRRKSYRD…KEEEEDQFSE (67 aa)) form a disordered region. Over residues 194-219 (SDDEDDEEEDESDGFDKEEEEDQFSE) the composition is skewed to acidic residues.

It belongs to the RRT14 family.

The protein localises to the nucleus. Its subcellular location is the nucleolus. Functionally, involved in ribosome biogenesis, probably through modulation of rDNA transcription. The sequence is that of Regulator of rDNA transcription 14 (RRT14) from Komagataella phaffii (strain GS115 / ATCC 20864) (Yeast).